The chain runs to 305 residues: Putative lipid kinase SAS0691 (305 aa).

One can recognise a DAGKc domain in the interval Asn-3 to Tyr-139. ATP is bound by residues Ser-44, Gly-74–Glu-80, and Thr-101. Residues Ser-220, Asp-223, and Glu-225 each contribute to the Mg(2+) site. The active-site Proton acceptor is the Glu-281.

It belongs to the diacylglycerol/lipid kinase family. The cofactor is Mg(2+).

In terms of biological role, may catalyze the ATP-dependent phosphorylation of lipids other than diacylglycerol (DAG). In Staphylococcus aureus (strain MSSA476), this protein is Putative lipid kinase SAS0691.